The sequence spans 949 residues: General transcription factor II-I repeat domain-containing protein 2B (949 aa).

2 GTF2I-like repeats span residues 98–192 (QVHS…QLGG) and 323–417 (LSSI…SNVG).

The protein belongs to the TFII-I family. As to expression, ubiquitous.

It localises to the nucleus. This Homo sapiens (Human) protein is General transcription factor II-I repeat domain-containing protein 2B (GTF2IRD2B).